A 514-amino-acid chain; its full sequence is Probable lipid II flippase MurJ (514 aa).

The next 14 membrane-spanning stretches (helical) occupy residues 3–23 (ILKS…FGFF), 25–45 (DVLI…FIAF), 92–112 (ILVL…IIFI), 130–150 (LLKI…CSSI), 157–177 (FFIP…FSFF), 186–206 (IISL…YQFP), 245–265 (ISLI…ISWI), 271–291 (LIEF…FTSF), 315–335 (LILS…LVII), 354–374 (LELY…VSAF), 386–406 (ISIL…FYFQ), 409–429 (GLAL…YWKL), 448–468 (LLIA…FIPS), and 481–501 (LFTI…FLGI).

It belongs to the MurJ/MviN family.

It localises to the cell inner membrane. The protein operates within cell wall biogenesis; peptidoglycan biosynthesis. Involved in peptidoglycan biosynthesis. Transports lipid-linked peptidoglycan precursors from the inner to the outer leaflet of the cytoplasmic membrane. The protein is Probable lipid II flippase MurJ of Buchnera aphidicola subsp. Schizaphis graminum (strain Sg).